The sequence spans 397 residues: MRCWLENLSGGRKMKFGEFGGRFVPEVLIPPLEELEKAYDRFKDDEEFKARLEYYLKSYAGRPTPLYFAENLSRELGVKIYLKREDLLHGGAHKINNTIGQALLAKFMGKKRVIAETGAGQHGVATAMAAALLGLEAEIYMGAEDYERQKMNVFRMELLGAKVTAVESGSRTLKDAINEALRDWVESFEHTHYLIGSVVGPHPFPTIVRDFQAVIGKEARRQIIEAEGGMPDAIIACVGGGSNAMGIFHPFLNDDVRLIGVEAGGEGIESGRHSASLTAGSKGVLHGMLSYFLQDEEGMMLDTHSVSAGLDYPGVGPEHAYLKETGRCEYVTVNDEEALRAFKTLSKLEGIIPALESAHAIAYAMKMAEEMQRDDVLVVNLSGRGDKDMDIVRRRLA.

Lys94 carries the N6-(pyridoxal phosphate)lysine modification.

It belongs to the TrpB family. Tetramer of two alpha and two beta chains. The cofactor is pyridoxal 5'-phosphate.

It carries out the reaction (1S,2R)-1-C-(indol-3-yl)glycerol 3-phosphate + L-serine = D-glyceraldehyde 3-phosphate + L-tryptophan + H2O. It functions in the pathway amino-acid biosynthesis; L-tryptophan biosynthesis; L-tryptophan from chorismate: step 5/5. Functionally, the beta subunit is responsible for the synthesis of L-tryptophan from indole and L-serine. The polypeptide is Tryptophan synthase beta chain 1 (trpB1) (Archaeoglobus fulgidus (strain ATCC 49558 / DSM 4304 / JCM 9628 / NBRC 100126 / VC-16)).